A 404-amino-acid chain; its full sequence is Cytoplasmic 60S subunit biogenesis factor REI1 homolog 1 (404 aa).

2 consecutive C2H2-type zinc fingers follow at residues 4-28 (LTCNACNMEFKDEEERNLHYKSDWH) and 68-92 (YTCAICAKGYRSSKAHEQHLQSRSH). A disordered region spans residues 119-169 (QHRGSIDDDSEDEWVEVDSDEELAAEEASDSLSKLNVNESGSAEDMDDDGD). 2 stretches are compositionally biased toward acidic residues: residues 125–147 (DDDSEDEWVEVDSDEELAAEEAS) and 160–169 (SAEDMDDDGD). 2 C2H2-type zinc fingers span residues 178-201 (TCCLMCDKKHKTLESCMLHMHKHH) and 229-256 (FMCLYCNELCRPFSSLEAVRKHMEAKSH).

This sequence belongs to the REI1 family. As to quaternary structure, can form homodimer. Interacts with RLP24, RPL24A, RPL24B, EBP1 and JJJ1.

Its subcellular location is the cytoplasm. Pre-60S-associated factor involved in the cytoplasmic maturation of the 60S subunit. Involved in the dissociation and recycling of other late pre-60S factors before newly synthesized large ribosomal subunits enter translation. Can complement the growth defect of a yeast mutant lacking REI1. Required for leaf growth under cold temperature conditions. This chain is Cytoplasmic 60S subunit biogenesis factor REI1 homolog 1, found in Arabidopsis thaliana (Mouse-ear cress).